A 409-amino-acid chain; its full sequence is Toluene 1,2-dioxygenase system ferredoxin--NAD(+) reductase component (409 aa).

An FAD-binding site is contributed by His-4 to Asp-35. NAD(+) is bound at residue Arg-145–Glu-173.

The protein belongs to the bacterial ring-hydroxylating dioxygenase ferredoxin reductase family. In terms of assembly, this dioxygenase system consists of four proteins: the two subunits of the hydroxylase component (todC1 and todC2), a ferredoxin (TodB) and a ferredoxin reductase (TodA). FAD is required as a cofactor.

The catalysed reaction is 2 reduced [2Fe-2S]-[ferredoxin] + NAD(+) + H(+) = 2 oxidized [2Fe-2S]-[ferredoxin] + NADH. The protein operates within xenobiotic degradation; toluene degradation. Functionally, part of the electron transfer component of toluene 1,2-dioxygenase, transfers electrons from ferredoxin (TodB) to NADH. In Pseudomonas putida (Arthrobacter siderocapsulatus), this protein is Toluene 1,2-dioxygenase system ferredoxin--NAD(+) reductase component (todA).